A 533-amino-acid chain; its full sequence is Calcium uptake protein 1 homolog, mitochondrial (533 aa).

Residues 1-13 (MLRHNFRSSIFIR) constitute a mitochondrion transit peptide. The segment at 127–147 (PFRPEASQKEESTDSGTEIEV) is disordered. 3 consecutive EF-hand domains span residues 270–305 (TSHA…IMSQ), 337–358 (KDGK…LQHD), and 465–500 (LSDH…RMRR). The Ca(2+) site is built by Asp-283, Asp-285, Asn-287, and Glu-294.

The protein belongs to the MICU1 family. MICU1 subfamily.

The protein resides in the mitochondrion intermembrane space. The protein localises to the mitochondrion inner membrane. Its function is as follows. Calcium sensor of the mitochondrial calcium uniporter (mcu-1) channel, which senses calcium level via its EF-hand domains. At low calcium levels, micu-1 occludes the pore of the mcu-1 channel, preventing mitochondrial calcium uptake. At higher calcium levels, calcium-binding to micu-1 induces a conformational change that weakens mcu-1-micu-1 interactions and moves micu-1 away from the pore, allowing calcium permeation through the mcu-1 channel. Also required to protect against manganese toxicity by preventing manganese uptake by mcu-1. Modulates the activity of the mitochondrial calcium uniporter protein mcu-1 depending on the level of intracellular calcium in PLM touch receptor neurons following axonal injury. This chain is Calcium uptake protein 1 homolog, mitochondrial, found in Caenorhabditis briggsae.